The sequence spans 151 residues: Putative membrane protein ORF10 (151 aa).

2 helical membrane-spanning segments follow: residues Leu7–Val23 and Gly107–Tyr123.

It is found in the membrane. This chain is Putative membrane protein ORF10 (ORF10), found in Ictalurid herpesvirus 1 (strain Auburn) (IcHV-1).